The chain runs to 259 residues: Imidazole glycerol phosphate synthase subunit HisF (259 aa).

Catalysis depends on residues Asp-11 and Asp-130.

The protein belongs to the HisA/HisF family. In terms of assembly, heterodimer of HisH and HisF.

It is found in the cytoplasm. The catalysed reaction is 5-[(5-phospho-1-deoxy-D-ribulos-1-ylimino)methylamino]-1-(5-phospho-beta-D-ribosyl)imidazole-4-carboxamide + L-glutamine = D-erythro-1-(imidazol-4-yl)glycerol 3-phosphate + 5-amino-1-(5-phospho-beta-D-ribosyl)imidazole-4-carboxamide + L-glutamate + H(+). The protein operates within amino-acid biosynthesis; L-histidine biosynthesis; L-histidine from 5-phospho-alpha-D-ribose 1-diphosphate: step 5/9. In terms of biological role, IGPS catalyzes the conversion of PRFAR and glutamine to IGP, AICAR and glutamate. The HisF subunit catalyzes the cyclization activity that produces IGP and AICAR from PRFAR using the ammonia provided by the HisH subunit. This Acidovorax ebreus (strain TPSY) (Diaphorobacter sp. (strain TPSY)) protein is Imidazole glycerol phosphate synthase subunit HisF.